We begin with the raw amino-acid sequence, 498 residues long: ATP synthase subunit beta, chloroplastic (498 aa).

172 to 179 (GGAGVGKT) contributes to the ATP binding site.

It belongs to the ATPase alpha/beta chains family. In terms of assembly, F-type ATPases have 2 components, CF(1) - the catalytic core - and CF(0) - the membrane proton channel. CF(1) has five subunits: alpha(3), beta(3), gamma(1), delta(1), epsilon(1). CF(0) has four main subunits: a(1), b(1), b'(1) and c(9-12).

It is found in the plastid. The protein resides in the chloroplast thylakoid membrane. The catalysed reaction is ATP + H2O + 4 H(+)(in) = ADP + phosphate + 5 H(+)(out). Produces ATP from ADP in the presence of a proton gradient across the membrane. The catalytic sites are hosted primarily by the beta subunits. In Agapanthus africanus (Lily of the Nile), this protein is ATP synthase subunit beta, chloroplastic.